The sequence spans 582 residues: tRNA-guanine(15) transglycosylase (582 aa).

Catalysis depends on D95, which acts as the Nucleophile. Residues D130 and G196 each coordinate substrate. Residues C279, C281, and C284 each contribute to the Zn(2+) site. Residues 507–582 form the PUA domain; it reads RMRVVVNKEA…RAVKVRKGVE (76 aa).

It belongs to the archaeosine tRNA-ribosyltransferase family. As to quaternary structure, homodimer. The cofactor is Zn(2+).

It catalyses the reaction guanosine(15) in tRNA + 7-cyano-7-deazaguanine = 7-cyano-7-carbaguanosine(15) in tRNA + guanine. It functions in the pathway tRNA modification; archaeosine-tRNA biosynthesis. Exchanges the guanine residue with 7-cyano-7-deazaguanine (preQ0) at position 15 in the dihydrouridine loop (D-loop) of archaeal tRNAs. The chain is tRNA-guanine(15) transglycosylase (tgtA) from Pyrococcus horikoshii (strain ATCC 700860 / DSM 12428 / JCM 9974 / NBRC 100139 / OT-3).